Reading from the N-terminus, the 403-residue chain is Indoleamine 2,3-dioxygenase 1 (403 aa).

His-346 contributes to the heme b binding site. A disordered region spans residues 360-381; it reads QQPKENKTSEDPSKLEAKGTGG. Positions 363 to 376 are enriched in basic and acidic residues; the sequence is KENKTSEDPSKLEA.

This sequence belongs to the indoleamine 2,3-dioxygenase family. Monomer. Heme b is required as a cofactor. Expressed in mature dendritic cells located in lymphoid organs (including lymph nodes, spleen, tonsils, Peyers's patches, the gut lamina propria, and the thymic medulla), in some epithelial cells of the female genital tract, as well as in endothelial cells of term placenta and in lung parenchyma. Weakly or not expressed in most normal tissues, but mostly inducible in most tissues. Expressed in more than 50% of tumors, either by tumoral, stromal, or endothelial cells (expression in tumor is associated with a worse clinical outcome). Not overexpressed in tumor-draining lymph nodes.

It localises to the cytoplasm. The protein localises to the cytosol. The enzyme catalyses D-tryptophan + O2 = N-formyl-D-kynurenine. It catalyses the reaction L-tryptophan + O2 = N-formyl-L-kynurenine. Its pathway is amino-acid degradation; L-tryptophan degradation via kynurenine pathway; L-kynurenine from L-tryptophan: step 1/2. With respect to regulation, activity is inhibited by and MTH-trp (methylthiohydantoin-DL-tryptophan), modestly inhibited by L-1MT (1-methyl-L-tryptophan) but not D-1MT (1-methyl-D-tryptophan). In terms of biological role, catalyzes the first and rate limiting step of the catabolism of the essential amino acid tryptophan along the kynurenine pathway. Involved in the peripheral immune tolerance, contributing to maintain homeostasis by preventing autoimmunity or immunopathology that would result from uncontrolled and overreacting immune responses. Tryptophan shortage inhibits T lymphocytes division and accumulation of tryptophan catabolites induces T-cell apoptosis and differentiation of regulatory T-cells. Acts as a suppressor of anti-tumor immunity. Limits the growth of intracellular pathogens by depriving tryptophan. Protects the fetus from maternal immune rejection. The chain is Indoleamine 2,3-dioxygenase 1 from Homo sapiens (Human).